Reading from the N-terminus, the 166-residue chain is NADPH-dependent 7-cyano-7-deazaguanine reductase (166 aa).

C57 functions as the Thioimide intermediate in the catalytic mechanism. Catalysis depends on D64, which acts as the Proton donor. Substrate is bound by residues 79 to 81 (VES) and 98 to 99 (HE).

It belongs to the GTP cyclohydrolase I family. QueF type 1 subfamily.

It localises to the cytoplasm. It catalyses the reaction 7-aminomethyl-7-carbaguanine + 2 NADP(+) = 7-cyano-7-deazaguanine + 2 NADPH + 3 H(+). It participates in tRNA modification; tRNA-queuosine biosynthesis. In terms of biological role, catalyzes the NADPH-dependent reduction of 7-cyano-7-deazaguanine (preQ0) to 7-aminomethyl-7-deazaguanine (preQ1). In Staphylococcus aureus (strain JH1), this protein is NADPH-dependent 7-cyano-7-deazaguanine reductase.